The sequence spans 192 residues: Small ribosomal subunit protein bS16 (192 aa).

Residues 153-192 are disordered; that stretch reads AEAKAKAEAEAAAAAEEAAETEETPVEAAAEEAPAAESAE. The span at 178–192 shows a compositional bias: low complexity; that stretch reads VEAAAEEAPAAESAE.

Belongs to the bacterial ribosomal protein bS16 family.

This Porphyromonas gingivalis (strain ATCC BAA-308 / W83) protein is Small ribosomal subunit protein bS16.